A 299-amino-acid polypeptide reads, in one-letter code: tRNA dimethylallyltransferase (299 aa).

Gly22–Thr29 lines the ATP pocket. Thr24–Thr29 provides a ligand contact to substrate. Interaction with substrate tRNA stretches follow at residues Asp47 to Gln50 and Gln172 to Arg176.

It belongs to the IPP transferase family. In terms of assembly, monomer. Requires Mg(2+) as cofactor.

The enzyme catalyses adenosine(37) in tRNA + dimethylallyl diphosphate = N(6)-dimethylallyladenosine(37) in tRNA + diphosphate. Functionally, catalyzes the transfer of a dimethylallyl group onto the adenine at position 37 in tRNAs that read codons beginning with uridine, leading to the formation of N6-(dimethylallyl)adenosine (i(6)A). This Endomicrobium trichonymphae protein is tRNA dimethylallyltransferase.